The primary structure comprises 695 residues: NADPH--cytochrome P450 reductase (695 aa).

Residues 1–8 are Lumenal-facing; the sequence is MAQLDTLD. The helical transmembrane segment at 9–31 threads the bilayer; sequence LVVLVVLLVGSAAYFTKGTYWAV. Over 32–695 the chain is Cytoplasmic; it reads PKDPYAASGP…SGSYQEDVWS (664 aa). The Flavodoxin-like domain occupies 66 to 221; that stretch reads CVIFYGSQTG…DFLAWKEPMW (156 aa). Residues 72-77, 123-126, 169-178, and aspartate 204 contribute to the FMN site; these read SQTGTA, ATYG, and LGNNTYEHYQ. Positions 277 to 538 constitute an FAD-binding FR-type domain; the sequence is HNPFIAPIVE…HVRHSNFKLP (262 aa). An NADP(+)-binding site is contributed by arginine 296. FAD contacts are provided by residues 451-454, 469-471, and 486-489; these read RYYS, TAV, and GVTT. NADP(+) contacts are provided by residues threonine 552, 614 to 615, 620 to 624, and glutamate 656; these read SR and KVYVQ. Position 694 (tryptophan 694) interacts with FAD.

It belongs to the NADPH--cytochrome P450 reductase family. This sequence in the N-terminal section; belongs to the flavodoxin family. In the C-terminal section; belongs to the flavoprotein pyridine nucleotide cytochrome reductase family. The cofactor is FAD. FMN is required as a cofactor.

The protein resides in the endoplasmic reticulum membrane. It is found in the mitochondrion outer membrane. The protein localises to the cell membrane. The enzyme catalyses 2 oxidized [cytochrome P450] + NADPH = 2 reduced [cytochrome P450] + NADP(+) + H(+). In terms of biological role, this enzyme is required for electron transfer from NADP to cytochrome P450 in microsomes. It can also provide electron transfer to heme oxygenase and cytochrome B5. Involved in ergosterol biosynthesis. The protein is NADPH--cytochrome P450 reductase of Aspergillus terreus (strain NIH 2624 / FGSC A1156).